The following is a 375-amino-acid chain: CCN family member 1 (375 aa).

Residues 1–22 form the signal peptide; sequence MGSAGARPALAAALLCLARLAL. Positions 23–94 constitute an IGFBP N-terminal domain; it reads GSPCPAVCQC…AATNGICRAQ (72 aa). 6 disulfides stabilise this stretch: Cys26-Cys50, Cys30-Cys52, Cys32-Cys53, Cys39-Cys56, Cys64-Cys78, and Cys70-Cys91. One can recognise a VWFC domain in the interval 98–164; that stretch reads RPCEYNSKIY…GQCCEEWVCD (67 aa). The TSP type-1 domain occupies 223 to 268; the sequence is KCIVQTTSWSQCSKTCGTGISTRVTNDNPDCKLIKETRICEVRPCG. The segment at 274–310 is heparin-binding; sequence SLKKGKKCTKTKKSPSPVRFTYAGCSSVKKYRPKYCG. 5 disulfide bridges follow: Cys281–Cys318, Cys298–Cys332, Cys309–Cys348, Cys312–Cys350, and Cys317–Cys354. The CTCK domain maps to 281-355; sequence CTKTKKSPSP…QSCRCNYNCP (75 aa).

It belongs to the CCN family.

It localises to the secreted. In terms of biological role, probable secreted regulatory protein. The chain is CCN family member 1 (CCN1) from Gallus gallus (Chicken).